The chain runs to 1939 residues: Myosin heavy chain, skeletal muscle, adult (1939 aa).

N-acetylalanine is present on Ala-2. In terms of domain architecture, Myosin N-terminal SH3-like spans 34 to 83 (DAKSSVFVVHPKESFVKGTIQSKEGGKVTVKTEGGETLTVKEDQVFSMNP). Position 36 is an N6-methyllysine (Lys-36). Residues 87-781 (DKIEDMAMMT…LLGLLEEMRD (695 aa)) enclose the Myosin motor domain. An N6,N6,N6-trimethyllysine modification is found at Lys-131. 180–187 (GESGAGKT) is a binding site for ATP. Lys-552 bears the N6,N6,N6-trimethyllysine mark. The tract at residues 658–680 (LNKLMANLRSTHPHFVRCIIPNE) is actin-binding. A Pros-methylhistidine modification is found at His-756. The interval 760-774 (RFGHTKVFFKAGLLG) is actin-binding. An IQ domain is found at 784-813 (LAEIITRTQARCRGFLMRVEYRRMVERRES). The interval 839-841 (IKP) is hinge. Residues 842 to 1939 (LLKSAESEKE…IHGKKIEEEE (1098 aa)) adopt a coiled-coil conformation.

Belongs to the TRAFAC class myosin-kinesin ATPase superfamily. Myosin family. As to quaternary structure, muscle myosin is a hexameric protein that consists of 2 heavy chain subunits (MHC), 2 alkali light chain subunits (MLC) and 2 regulatory light chain subunits (MLC-2).

The protein localises to the cytoplasm. The protein resides in the myofibril. Muscle contraction. Myosin is a protein that binds to F-actin and has ATPase activity that is activated by F-actin. This Gallus gallus (Chicken) protein is Myosin heavy chain, skeletal muscle, adult.